We begin with the raw amino-acid sequence, 211 residues long: Thymidylate kinase (211 aa).

Position 11-18 (11-18 (GPDGAGKT)) interacts with ATP.

The protein belongs to the thymidylate kinase family.

It carries out the reaction dTMP + ATP = dTDP + ADP. In terms of biological role, phosphorylation of dTMP to form dTDP in both de novo and salvage pathways of dTTP synthesis. The polypeptide is Thymidylate kinase (Streptococcus equi subsp. zooepidemicus (strain H70)).